Consider the following 412-residue polypeptide: Alanyl-tRNA editing protein Aarsd1 (412 aa).

Residues His-109 and His-113 each contribute to the Zn(2+) site. Phosphoserine is present on Ser-174. Cys-209 and His-213 together coordinate Zn(2+).

This sequence belongs to the class-II aminoacyl-tRNA synthetase family. Alax-L subfamily. Zn(2+) is required as a cofactor.

Its subcellular location is the cytoplasm. Its function is as follows. Functions in trans to edit the amino acid moiety from incorrectly charged tRNA(Ala). The protein is Alanyl-tRNA editing protein Aarsd1 (Aarsd1) of Rattus norvegicus (Rat).